The sequence spans 444 residues: Adenylosuccinate lyase (444 aa).

N(6)-(1,2-dicarboxyethyl)-AMP-binding positions include 9-10, 73-75, and 97-98; these read RY, KHD, and TS. Histidine 145 functions as the Proton donor/acceptor in the catalytic mechanism. Glutamine 219 is a binding site for N(6)-(1,2-dicarboxyethyl)-AMP. Serine 269 serves as the catalytic Proton donor/acceptor. N(6)-(1,2-dicarboxyethyl)-AMP is bound by residues serine 270, 275 to 277, asparagine 283, and 314 to 318; these read KRN and SAERI.

Belongs to the lyase 1 family. Adenylosuccinate lyase subfamily. Homotetramer. Residues from neighboring subunits contribute catalytic and substrate-binding residues to each active site.

It catalyses the reaction N(6)-(1,2-dicarboxyethyl)-AMP = fumarate + AMP. It carries out the reaction (2S)-2-[5-amino-1-(5-phospho-beta-D-ribosyl)imidazole-4-carboxamido]succinate = 5-amino-1-(5-phospho-beta-D-ribosyl)imidazole-4-carboxamide + fumarate. The protein operates within purine metabolism; AMP biosynthesis via de novo pathway; AMP from IMP: step 2/2. It functions in the pathway purine metabolism; IMP biosynthesis via de novo pathway; 5-amino-1-(5-phospho-D-ribosyl)imidazole-4-carboxamide from 5-amino-1-(5-phospho-D-ribosyl)imidazole-4-carboxylate: step 2/2. Functionally, catalyzes two reactions in de novo purine nucleotide biosynthesis. Catalyzes the breakdown of 5-aminoimidazole- (N-succinylocarboxamide) ribotide (SAICAR or 2-[5-amino-1-(5-phospho-beta-D-ribosyl)imidazole-4-carboxamido]succinate) to 5-aminoimidazole-4-carboxamide ribotide (AICAR or 5-amino-1-(5-phospho-beta-D-ribosyl)imidazole-4-carboxamide) and fumarate, and of adenylosuccinate (ADS or N(6)-(1,2-dicarboxyethyl)-AMP) to adenosine monophosphate (AMP) and fumarate. This is Adenylosuccinate lyase (purB) from Archaeoglobus fulgidus (strain ATCC 49558 / DSM 4304 / JCM 9628 / NBRC 100126 / VC-16).